The chain runs to 157 residues: Beta-defensin 125 (157 aa).

The N-terminal stretch at 1-20 (MNILMLTFIICGLLTQVTKG) is a signal peptide. Disulfide bonds link cysteine 27/cysteine 55, cysteine 35/cysteine 49, and cysteine 39/cysteine 56. Positions 109-157 (GETMTPETNTPETTVPPSETTTPETTMPPSETATSETMPPPSQTALTHN) are disordered. Residues 110-145 (ETMTPETNTPETTVPPSETTTPETTMPPSETATSET) are compositionally biased toward low complexity.

The protein belongs to the beta-defensin family.

The protein localises to the secreted. In terms of biological role, has antibacterial activity. This is Beta-defensin 125 (DEFB125) from Gorilla gorilla gorilla (Western lowland gorilla).